Consider the following 43-residue polypeptide: Kappa-actitoxin-Avd4p (43 aa).

Cystine bridges form between Cys-4–Cys-39, Cys-6–Cys-32, and Cys-22–Cys-40.

The protein resides in the secreted. It is found in the nematocyst. Blocks Kv3 voltage-gated potassium channels. Reduces blood pressure. This chain is Kappa-actitoxin-Avd4p, found in Anemonia viridis (Snakelocks anemone).